A 102-amino-acid polypeptide reads, in one-letter code: Small ribosomal subunit protein uS10 (102 aa).

Belongs to the universal ribosomal protein uS10 family. In terms of assembly, part of the 30S ribosomal subunit.

Functionally, involved in the binding of tRNA to the ribosomes. This Hyperthermus butylicus (strain DSM 5456 / JCM 9403 / PLM1-5) protein is Small ribosomal subunit protein uS10.